We begin with the raw amino-acid sequence, 261 residues long: High-affinity zinc uptake system membrane protein ZnuB (261 aa).

The next 7 helical transmembrane spans lie at 8–28 (GWLA…FIIW), 54–74 (IDSF…LVWM), 84–104 (TILS…ISLM), 129–149 (CIIA…WNSI), 179–199 (ICIS…LLII), 215–235 (IGFS…LSFF), and 238–254 (VPTS…VYLL).

It belongs to the ABC-3 integral membrane protein family.

It localises to the cell membrane. Functionally, involved in the high-affinity zinc uptake transport system. This is High-affinity zinc uptake system membrane protein ZnuB (znuB) from Buchnera aphidicola subsp. Schizaphis graminum (strain Sg).